A 365-amino-acid polypeptide reads, in one-letter code: Fucose-specific lectin (365 aa).

Residues 1 to 21 (MKLLHFTILLQVSLFPASSLA) form the signal peptide. Tandem repeats lie at residues 22–79 (QAGG…NDTI), 80–141 (AKAR…NQYN), 142–206 (FQVA…RLAN), 207–261 (FGPA…VRTA), 262–309 (KPRT…DGAF), and 310–365 (EHSA…IPPA). A 6 X approximate tandem repeats region spans residues 22–365 (QAGGNNTEVQ…RRGILAIPPA (344 aa)). N-linked (GlcNAc...) asparagine glycosylation occurs at N26. Beta-L-fucose is bound by residues R51, E63, and W70. N-linked (GlcNAc...) asparagine glycosylation is found at N76 and N85. Beta-L-fucose is bound at residue R111. An N-linked (GlcNAc...) asparagine glycan is attached at N118. Beta-L-fucose-binding residues include E123, W132, R164, E176, W201, and R231. N248 carries an N-linked (GlcNAc...) asparagine glycan. Residues R283, R333, and E347 each contribute to the beta-L-fucose site.

The protein belongs to the fungal fucose-specific lectin family. As to quaternary structure, homodimer.

The protein localises to the secreted. Probable L-fucose-binding lectin. The protein is Fucose-specific lectin of Arthroderma benhamiae (strain ATCC MYA-4681 / CBS 112371) (Trichophyton mentagrophytes).